Here is a 91-residue protein sequence, read N- to C-terminus: Small ribosomal subunit protein uS19 (91 aa).

It belongs to the universal ribosomal protein uS19 family.

In terms of biological role, protein S19 forms a complex with S13 that binds strongly to the 16S ribosomal RNA. This Opitutus terrae (strain DSM 11246 / JCM 15787 / PB90-1) protein is Small ribosomal subunit protein uS19.